The primary structure comprises 126 residues: Large ribosomal subunit protein uL22 (126 aa).

The protein belongs to the universal ribosomal protein uL22 family. In terms of assembly, part of the 50S ribosomal subunit.

Its function is as follows. This protein binds specifically to 23S rRNA; its binding is stimulated by other ribosomal proteins, e.g. L4, L17, and L20. It is important during the early stages of 50S assembly. It makes multiple contacts with different domains of the 23S rRNA in the assembled 50S subunit and ribosome. In terms of biological role, the globular domain of the protein is located near the polypeptide exit tunnel on the outside of the subunit, while an extended beta-hairpin is found that lines the wall of the exit tunnel in the center of the 70S ribosome. The protein is Large ribosomal subunit protein uL22 of Rhodospirillum rubrum (strain ATCC 11170 / ATH 1.1.1 / DSM 467 / LMG 4362 / NCIMB 8255 / S1).